Here is a 321-residue protein sequence, read N- to C-terminus: MERMLLLSPPSLAARPERLNTILSSHSRYATDLQMLDRVAAGLVSLPQSTYDIVMLLTDVDGLGTGSTSAMGRGVIQSVVRALRPGGKFKRENGTFPSTECPDNTELMLAGLVFDDTGGLLKPDFGPENIVPLKLGKRKPVHSVSSNGTGTSGPHVNMQLSTGSMLKGQTTTIKGVGFVDFTDDPSLSEADIYSGQTDDELIDEETLLDGEDMGRPIIQPPECRPKAGKRRRACKDCTCGLAERLREEDKAARAKADATLETMKLAPKELAEVDFTVQGKLGSCGNCALGDAFRCDGCPYIGLPPFKPGEEVRLLSNDVQL.

The N-terminal SAM-like domain stretch occupies residues 1–131 (MERMLLLSPP…KPDFGPENIV (131 aa)). The tract at residues 132–213 (PLKLGKRKPV…EETLLDGEDM (82 aa)) is linker. [2Fe-2S] cluster is bound by residues Cys223, Cys234, Cys237, and Cys239. The interval 223-239 (CRPKAGKRRRACKDCTC) is fe-S binding site A. Cys284, Cys287, Cys295, and Cys298 together coordinate [4Fe-4S] cluster. 2 short sequence motifs (cx2C motif) span residues 284–287 (CGNC) and 295–298 (CDGC). The fe-S binding site B stretch occupies residues 284–298 (CGNCALGDAFRCDGC).

It belongs to the anamorsin family. As to quaternary structure, monomer. Interacts with TAH18. Interacts with MIA40. [2Fe-2S] cluster serves as cofactor. The cofactor is [4Fe-4S] cluster.

It localises to the cytoplasm. Its subcellular location is the mitochondrion intermembrane space. In terms of biological role, component of the cytosolic iron-sulfur (Fe-S) protein assembly (CIA) machinery required for the maturation of extramitochondrial Fe-S proteins. Part of an electron transfer chain functioning in an early step of cytosolic Fe-S biogenesis, facilitating the de novo assembly of a [4Fe-4S] cluster on the scaffold complex CFD1-NBP35. Electrons are transferred to DRE2 from NADPH via the FAD- and FMN-containing protein TAH18. TAH18-DRE2 are also required for the assembly of the diferric tyrosyl radical cofactor of ribonucleotide reductase (RNR), probably by providing electrons for reduction during radical cofactor maturation in the catalytic small subunit RNR2. This Coccidioides posadasii (strain C735) (Valley fever fungus) protein is Fe-S cluster assembly protein DRE2.